The following is a 630-amino-acid chain: A-type voltage-gated potassium channel KCND2 (630 aa).

Topologically, residues 1–184 (MAAGVAAWLP…FENPHTSTMA (184 aa)) are cytoplasmic. The interaction with KCNIP1, KCNIP2, and other family members stretch occupies residues 2–20 (AAGVAAWLPFARAAAIGWM). Thr38 is modified (phosphothreonine). Residues 71–90 (ERDFFYHPETQQYFFDRDPD) are interaction with KCNIP1. Residues His105, Cys111, Cys132, and Cys133 each contribute to the Zn(2+) site. A helical membrane pass occupies residues 185 to 206 (LVFYYVTGFFIAVSVIANVVET). Topologically, residues 207–226 (VPCGSSPGHIKELPCGERYA) are extracellular. Residues 227 to 249 (VAFFCLDTACVMIFTVEYLLRLA) traverse the membrane as a helical segment. The Cytoplasmic segment spans residues 250-256 (AAPSRYR). Residues 257-281 (FVRSVMSIIDVVAILPYYIGLVMTD) traverse the membrane as a helical segment. At 282 to 287 (NEDVSG) the chain is on the extracellular side. The helical; Voltage-sensor transmembrane segment at 288 to 307 (AFVTLRVFRVFRIFKFSRHS) threads the bilayer. Over 308–321 (QGLRILGYTLKSCA) the chain is Cytoplasmic. Residues 308–321 (QGLRILGYTLKSCA) are S4-S5 linker. Residues 322-345 (SELGFLLFSLTMAIIIFATVMFYA) traverse the membrane as a helical segment. Residues 346 to 357 (EKGSSASKFTSI) lie on the Extracellular side of the membrane. Positions 358-369 (PAAFWYTIVTMT) form an intramembrane region, helical. K(+) is bound by residues Thr370, Leu371, Gly372, and Tyr373. A Selectivity filter motif is present at residues 370 to 375 (TLGYGD). The stretch at 370–377 (TLGYGDMV) is an intramembrane region. Residues 378–380 (PKT) are Extracellular-facing. A helical membrane pass occupies residues 381–403 (IAGKIFGSICSLSGVLVIALPVP). The Cytoplasmic segment spans residues 404-630 (VIVSNFSRIY…GGNIVRVSAL (227 aa)). Positions 474 to 489 (FETQHHHLLHCLEKTT) are required for dendritic targeting. An important for normal channel activation and inactivation, for interaction with KCNIP2, and probably other family members as well region spans residues 474 to 630 (FETQHHHLLH…GGNIVRVSAL (157 aa)). Phosphoserine is present on residues Ser548, Ser552, Ser572, and Ser575. Residues 600-622 (IPTPPVTTPEGDDRPESPEYSGG) are disordered. Residues Thr602 and Thr607 each carry the phosphothreonine modification. At Ser616 the chain carries Phosphoserine. The PDZ-binding motif lies at 627–630 (VSAL).

This sequence belongs to the potassium channel family. D (Shal) (TC 1.A.1.2) subfamily. Kv4.2/KCND2 sub-subfamily. In terms of assembly, homotetramer or heterotetramer with KCND1 or KCND3. Associates with the regulatory subunits KCNIP2, KCNIP3 and KCNIP4. Interacts with the regulatory subunit KCNIP1; this interaction mediates the capture of both the N- and C-terminus of KCND2, preventing N-type inactivation and stabilizing the S6 conformation, thereby accelerating closed state inactivation and recovery. In vivo, probably exists as heteromeric complex containing variable proportions of KCND1, KCND2, KCND3, KCNIP1, KCNIP2, KCNIP3, KCNIP4, DPP6 and DPP10. The tetrameric channel can associate with up to four regulatory subunits, such as KCNIP2 or KCNIP4. Interaction with four KCNIP4 chains does not reduce interaction with DPP10. Interacts with DLG4 and NCS1/FREQ. Interacts with DLG1. Probably part of a complex consisting of KCNIP1, KCNIP2 isoform 3 and KCND2. Interacts with FLNA, FLNC and DPP10. Identified in a complex with cAMP-dependent protein kinase (PKA), CAV3, AKAP6 and KCND3 in cardiac myocytes. Interacts (via S1 and S2 helices) with DPP6; this interaction stabilizes the conformation of the S1-S2 helices and facilitates S4 conformational change, including S4 sliding up and down, thereby accelerating activation, inactivation, and recovery. Post-translationally, phosphorylation in response to MAPK activation is increased in stimulated dendrites. Interaction with KCNIP2 and DPP6 propomtes phosphorylation by PKA at Ser-552. Phosphorylation at Ser-552 has no effect on interaction with KCNIP3, but is required for the regulation of channel activity by KCNIP3. Phosphorylation at Ser-552 leads to KCND2 internalization. Phosphorylated by MAPK in response to signaling via the metabotropic glutamate receptor GRM5. Phosphorylation at Ser-616 is required for the down-regulation of neuronal A-type currents in response to signaling via GRM5.

It is found in the cell membrane. The protein resides in the cell projection. Its subcellular location is the dendrite. It localises to the synapse. The protein localises to the perikaryon. It is found in the postsynaptic cell membrane. The protein resides in the dendritic spine. Its subcellular location is the sarcolemma. It localises to the cell junction. The protein localises to the membrane. It is found in the caveola. The catalysed reaction is K(+)(in) = K(+)(out). In terms of biological role, voltage-gated potassium channel that mediates transmembrane potassium transport in excitable membranes, primarily in the brain, but also in rodent heart. Mediates the major part of the dendritic A-type current I(SA) in brain neurons. This current is activated at membrane potentials that are below the threshold for action potentials. It regulates neuronal excitability, prolongs the latency before the first spike in a series of action potentials, regulates the frequency of repetitive action potential firing, shortens the duration of action potentials and regulates the back-propagation of action potentials from the neuronal cell body to the dendrites. Contributes to the regulation of the circadian rhythm of action potential firing in suprachiasmatic nucleus neurons, which regulates the circadian rhythm of locomotor activity. Functions downstream of the metabotropic glutamate receptor GRM5 and plays a role in neuronal excitability and in nociception mediated by activation of GRM5. Mediates the transient outward current I(to) in rodent heart left ventricle apex cells, but not in human heart, where this current is mediated by another family member. Forms tetrameric potassium-selective channels through which potassium ions pass in accordance with their electrochemical gradient. The channel alternates between opened and closed conformations in response to the voltage difference across the membrane. Can form functional homotetrameric channels and heterotetrameric channels that contain variable proportions of KCND2 and KCND3; channel properties depend on the type of pore-forming alpha subunits that are part of the channel. In vivo, membranes probably contain a mixture of heteromeric potassium channel complexes. Interaction with specific isoforms of the regulatory subunits KCNIP1, KCNIP2, KCNIP3 or KCNIP4 strongly increases expression at the cell surface and thereby increases channel activity; it modulates the kinetics of channel activation and inactivation, shifts the threshold for channel activation to more negative voltage values, shifts the threshold for inactivation to less negative voltages and accelerates recovery after inactivation. Likewise, interaction with DPP6 or DPP10 promotes expression at the cell membrane and regulates both channel characteristics and activity. Upon depolarization, the channel goes from a resting closed state (C state) to an activated but non-conducting state (C* state), from there, the channel may either inactivate (I state) or open (O state). In Mustela putorius furo (European domestic ferret), this protein is A-type voltage-gated potassium channel KCND2.